Consider the following 219-residue polypeptide: ATP-dependent dethiobiotin synthetase BioD (219 aa).

Asp-14–Tyr-19 is an ATP binding site. Residue Thr-18 participates in Mg(2+) binding. Lys-37 is an active-site residue. Ser-41 contributes to the substrate binding site. Residues Asp-54, Glu-114–Gly-117, and Asn-175–Asn-176 contribute to the ATP site. Mg(2+) contacts are provided by Asp-54 and Glu-114.

This sequence belongs to the dethiobiotin synthetase family. Homodimer. Mg(2+) is required as a cofactor.

It is found in the cytoplasm. The enzyme catalyses (7R,8S)-7,8-diammoniononanoate + CO2 + ATP = (4R,5S)-dethiobiotin + ADP + phosphate + 3 H(+). Its pathway is cofactor biosynthesis; biotin biosynthesis; biotin from 7,8-diaminononanoate: step 1/2. Catalyzes a mechanistically unusual reaction, the ATP-dependent insertion of CO2 between the N7 and N8 nitrogen atoms of 7,8-diaminopelargonic acid (DAPA, also called 7,8-diammoniononanoate) to form a ureido ring. The polypeptide is ATP-dependent dethiobiotin synthetase BioD (Fusobacterium nucleatum subsp. nucleatum (strain ATCC 25586 / DSM 15643 / BCRC 10681 / CIP 101130 / JCM 8532 / KCTC 2640 / LMG 13131 / VPI 4355)).